The chain runs to 194 residues: MKVILLERVEGTGVLGDVVTVKDGFARNFLLPRHKALRANSANLKSFEVQRAEIEARNVKNREAAGKSGEGLDGKQYVMIRQAGESGQLYGSVAGRDVADAIKAEGGKVDRSMIVLDKPIKTLGVHEVKVKLHAEVTVTVTLNIARSQDEADRQARGENVVAAQFEEDRAAEAEAASDMAAGGAGSFEGDHYES.

The segment at 167–194 (EDRAAEAEAASDMAAGGAGSFEGDHYES) is disordered.

This sequence belongs to the bacterial ribosomal protein bL9 family.

Its function is as follows. Binds to the 23S rRNA. In Caulobacter sp. (strain K31), this protein is Large ribosomal subunit protein bL9.